A 310-amino-acid chain; its full sequence is Bifunctional phosphoglucose/phosphomannose isomerase (310 aa).

The SIS domain maps to 22–152; sequence FDGSFRTGTF…IRPKHEDIEE (131 aa). The D-fructose 6-phosphate site is built by G41, S42, S80, S82, T85, and R128. E202 acts as the Proton acceptor in catalysis. Residues H218 and K306 each contribute to the D-fructose 6-phosphate site. Catalysis depends on H218, which acts as the Proton donor. K306 functions as the Proton acceptor in the catalytic mechanism.

This sequence belongs to the PGI/PMI family. In terms of assembly, homodimer.

It carries out the reaction alpha-D-glucose 6-phosphate = beta-D-fructose 6-phosphate. It catalyses the reaction D-mannose 6-phosphate = D-fructose 6-phosphate. Its activity is regulated as follows. Inhibited by low concentrations of erythrose 4-phosphate and 6-phosphogluconate. Dual specificity isomerase that catalyzes the isomerization of both glucose-6-phosphate and mannose-6-phosphate to fructose-6-phosphate with similar catalytic efficiency. The sequence is that of Bifunctional phosphoglucose/phosphomannose isomerase from Thermoplasma acidophilum (strain ATCC 25905 / DSM 1728 / JCM 9062 / NBRC 15155 / AMRC-C165).